Reading from the N-terminus, the 211-residue chain is MVDWDVYLVTQASLSAGRTTDEIVAEAIESGVGVVQLREKNRTARERYELGQKLRELTREADVTFVVNDRIDLAQAIDADGVHLGDDDLPVSVARDILGDDAVIGRSVSTVEDAREAATAGADYLGVGAVFATGSKDDIDDEEYAVGTDRVAAIAEAVDIPFVGIGGITAGNATAVVDAGADGVAVITEITKADDPAAAAEALHSAVEQGR.

Residues 36–40 and asparagine 68 contribute to the 4-amino-2-methyl-5-(diphosphooxymethyl)pyrimidine site; that span reads QLREK. Aspartate 69 and aspartate 88 together coordinate Mg(2+). 4-amino-2-methyl-5-(diphosphooxymethyl)pyrimidine is bound at residue serine 107. A 2-[(2R,5Z)-2-carboxy-4-methylthiazol-5(2H)-ylidene]ethyl phosphate-binding site is contributed by 133-135; sequence TGS. Lysine 136 is a binding site for 4-amino-2-methyl-5-(diphosphooxymethyl)pyrimidine. Residues glycine 167 and 187 to 188 contribute to the 2-[(2R,5Z)-2-carboxy-4-methylthiazol-5(2H)-ylidene]ethyl phosphate site; that span reads IT.

Belongs to the thiamine-phosphate synthase family. Mg(2+) is required as a cofactor.

The catalysed reaction is 2-[(2R,5Z)-2-carboxy-4-methylthiazol-5(2H)-ylidene]ethyl phosphate + 4-amino-2-methyl-5-(diphosphooxymethyl)pyrimidine + 2 H(+) = thiamine phosphate + CO2 + diphosphate. It catalyses the reaction 2-(2-carboxy-4-methylthiazol-5-yl)ethyl phosphate + 4-amino-2-methyl-5-(diphosphooxymethyl)pyrimidine + 2 H(+) = thiamine phosphate + CO2 + diphosphate. It carries out the reaction 4-methyl-5-(2-phosphooxyethyl)-thiazole + 4-amino-2-methyl-5-(diphosphooxymethyl)pyrimidine + H(+) = thiamine phosphate + diphosphate. It functions in the pathway cofactor biosynthesis; thiamine diphosphate biosynthesis; thiamine phosphate from 4-amino-2-methyl-5-diphosphomethylpyrimidine and 4-methyl-5-(2-phosphoethyl)-thiazole: step 1/1. Functionally, condenses 4-methyl-5-(beta-hydroxyethyl)thiazole monophosphate (THZ-P) and 2-methyl-4-amino-5-hydroxymethyl pyrimidine pyrophosphate (HMP-PP) to form thiamine monophosphate (TMP). In Haloarcula marismortui (strain ATCC 43049 / DSM 3752 / JCM 8966 / VKM B-1809) (Halobacterium marismortui), this protein is Thiamine-phosphate synthase.